A 166-amino-acid polypeptide reads, in one-letter code: Crossover junction endodeoxyribonuclease RuvC (166 aa).

Residues Asp-7, Glu-68, and Asp-141 contribute to the active site. 3 residues coordinate Mg(2+): Asp-7, Glu-68, and Asp-141.

The protein belongs to the RuvC family. As to quaternary structure, homodimer which binds Holliday junction (HJ) DNA. The HJ becomes 2-fold symmetrical on binding to RuvC with unstacked arms; it has a different conformation from HJ DNA in complex with RuvA. In the full resolvosome a probable DNA-RuvA(4)-RuvB(12)-RuvC(2) complex forms which resolves the HJ. Requires Mg(2+) as cofactor.

It is found in the cytoplasm. The enzyme catalyses Endonucleolytic cleavage at a junction such as a reciprocal single-stranded crossover between two homologous DNA duplexes (Holliday junction).. In terms of biological role, the RuvA-RuvB-RuvC complex processes Holliday junction (HJ) DNA during genetic recombination and DNA repair. Endonuclease that resolves HJ intermediates. Cleaves cruciform DNA by making single-stranded nicks across the HJ at symmetrical positions within the homologous arms, yielding a 5'-phosphate and a 3'-hydroxyl group; requires a central core of homology in the junction. The consensus cleavage sequence is 5'-(A/T)TT(C/G)-3'. Cleavage occurs on the 3'-side of the TT dinucleotide at the point of strand exchange. HJ branch migration catalyzed by RuvA-RuvB allows RuvC to scan DNA until it finds its consensus sequence, where it cleaves and resolves the cruciform DNA. The polypeptide is Crossover junction endodeoxyribonuclease RuvC (Caldicellulosiruptor saccharolyticus (strain ATCC 43494 / DSM 8903 / Tp8T 6331)).